Here is a 328-residue protein sequence, read N- to C-terminus: Probable ATP-dependent 6-phosphofructokinase (328 aa).

Residues glycine 16, arginine 77–phenylalanine 78, and glycine 107–serine 110 contribute to the ATP site. Aspartate 108 contacts Mg(2+). Substrate is bound by residues threonine 130–aspartate 132, arginine 167, methionine 174–arginine 176, glutamate 226, and histidine 258–arginine 261. The active-site Proton acceptor is aspartate 132.

The protein belongs to the phosphofructokinase type A (PFKA) family. As to quaternary structure, homotetramer. Requires Mg(2+) as cofactor.

It is found in the cytoplasm. The catalysed reaction is beta-D-fructose 6-phosphate + ATP = beta-D-fructose 1,6-bisphosphate + ADP + H(+). The protein operates within carbohydrate degradation; glycolysis; D-glyceraldehyde 3-phosphate and glycerone phosphate from D-glucose: step 3/4. In terms of biological role, catalyzes the phosphorylation of D-fructose 6-phosphate to fructose 1,6-bisphosphate by ATP, the first committing step of glycolysis. The chain is Probable ATP-dependent 6-phosphofructokinase (pfkA) from Mycoplasma pneumoniae (strain ATCC 29342 / M129 / Subtype 1) (Mycoplasmoides pneumoniae).